A 92-amino-acid polypeptide reads, in one-letter code: uncharacterized protein (92 aa).

This is an uncharacterized protein from Pseudoalteromonas phage PM2 (Bacteriophage PM2).